The following is a 232-amino-acid chain: Ubiquinone biosynthesis O-methyltransferase (232 aa).

S-adenosyl-L-methionine-binding residues include Arg-36, Gly-55, Asp-76, and Leu-120.

Belongs to the methyltransferase superfamily. UbiG/COQ3 family.

The catalysed reaction is a 3-demethylubiquinol + S-adenosyl-L-methionine = a ubiquinol + S-adenosyl-L-homocysteine + H(+). It carries out the reaction a 3-(all-trans-polyprenyl)benzene-1,2-diol + S-adenosyl-L-methionine = a 2-methoxy-6-(all-trans-polyprenyl)phenol + S-adenosyl-L-homocysteine + H(+). Its pathway is cofactor biosynthesis; ubiquinone biosynthesis. Functionally, O-methyltransferase that catalyzes the 2 O-methylation steps in the ubiquinone biosynthetic pathway. The chain is Ubiquinone biosynthesis O-methyltransferase from Pseudomonas savastanoi pv. phaseolicola (strain 1448A / Race 6) (Pseudomonas syringae pv. phaseolicola (strain 1448A / Race 6)).